The sequence spans 818 residues: LPS-assembly protein LptD (818 aa).

The N-terminal stretch at 1-33 (MVNETMKHQFKFNPLATAIFTLLCSGSIQSSYA) is a signal peptide.

The protein belongs to the LptD family. As to quaternary structure, component of the lipopolysaccharide transport and assembly complex. Interacts with LptE and LptA.

Its subcellular location is the cell outer membrane. In terms of biological role, together with LptE, is involved in the assembly of lipopolysaccharide (LPS) at the surface of the outer membrane. In Acinetobacter baumannii (strain ATCC 19606 / DSM 30007 / JCM 6841 / CCUG 19606 / CIP 70.34 / NBRC 109757 / NCIMB 12457 / NCTC 12156 / 81), this protein is LPS-assembly protein LptD.